The chain runs to 120 residues: MNTTDSLKTVNEWTNKSVERMTSFGELNVRLFEKLAARQMDAVNLYMDHSMRLMKLATESKGYNDLFKGQVDATKELSERVMAESKATMQFFGDARDEYRVWFEKSLNDVSEDLRKSVAV.

This is an uncharacterized protein from Allochromatium vinosum (strain ATCC 17899 / DSM 180 / NBRC 103801 / NCIMB 10441 / D) (Chromatium vinosum).